A 270-amino-acid polypeptide reads, in one-letter code: Esterase (270 aa).

Active-site charge relay system residues include Ser127, Asp216, and His244.

The protein belongs to the LovG family.

It functions in the pathway mycotoxin biosynthesis. Functionally, esterase; part of the gene cluster that mediates the biosynthesis of the selective antifungal agent ascochitine, an o-quinone methide that plays a possible protective role against other microbial competitors in nature and is considered to be important for pathogenicity of legume-associated Didymella species. The pathway probably begins with the synthesis of a keto-aldehyde intermediate by the ascochitine non-reducing polyketide synthase pksAC from successive condensations of 4 malonyl-CoA units, presumably with a simple acetyl-CoA starter unit. Release of the keto-aldehyde intermediate is consistent with the presence of the C-terminal reductive release domain. The HR-PKS (orf7) probably makes a diketide starter unit which is passed to the non-reducing polyketide synthase pksAC for further extension, producing ascochital and ascochitine. The aldehyde dehydrogenase (orf1), the 2-oxoglutarate-dependent dioxygenase (orf3) and the dehydrogenase (orf9) are probably involved in subsequent oxidations of methyl groups to the carboxylic acid of the heterocyclic ring. The ascochitine gene cluster also includes a gene encoding a short peptide with a cupin domain (orf2) that is often found in secondary metabolite gene clusters and which function has still to be determined. The polypeptide is Esterase (Didymella fabae (Leaf and pod spot disease fungus)).